The following is a 111-amino-acid chain: Rhodanese domain-containing protein CG4456 (111 aa).

One can recognise a Rhodanese domain in the interval 12–110 (NHPDVYLIDV…SWNEWAQKEG (99 aa)).

The chain is Rhodanese domain-containing protein CG4456 from Drosophila melanogaster (Fruit fly).